Here is a 306-residue protein sequence, read N- to C-terminus: 4-hydroxybenzoate geranyltransferase 2 (306 aa).

8 consecutive transmembrane segments (helical) span residues 38–58 (IGSW…ADLG), 61–81 (PKML…GCTI), 119–139 (LFIG…LAIV), 153–173 (ITYW…LLGS), 178–198 (GSVV…WTLV), 229–249 (IWIT…GFIV), 251–271 (IGLP…WQIF), and 285–305 (FVSN…GRLF).

Belongs to the UbiA prenyltransferase family. Mg(2+) is required as a cofactor. Expressed only in roots.

Its subcellular location is the endoplasmic reticulum membrane. The catalysed reaction is 4-hydroxybenzoate + (2E)-geranyl diphosphate = 3-geranyl-4-hydroxybenzoate + diphosphate. Its function is as follows. Prenyltransferase involved in the biosynthesis of shikonin, a naphthoquinone secondary metabolite. Could accept only geranyl diphosphate and not dimethylallyl diphosphate, farnesyl diphosphate, or geranylgeranyl diphosphate as substrate. In Lithospermum erythrorhizon (Purple gromwell), this protein is 4-hydroxybenzoate geranyltransferase 2 (PGT-2).